A 524-amino-acid polypeptide reads, in one-letter code: MDTSLFSLFVPILVFVFIALFKKSKKPKYVKAPAPSGAWPIIGHLHLLGGKEQLLYRTLGKMADHYGPAMSLQLGSNEAFVVSSFEVAKDCFTVNDKALASRPMTAAAKHMGYNFAVFGFAPYSAFWREMRKIATIELLSNRRLQMLKHVRVSEITMGVKDLYSLWFKNGGTKPVMVDLKSWLEDMTLNMIVRMVAGKRYFGGGGSVSSEDTEEAMQCKKAIAKFFHLIGIFTVSDAFPTLSFFDLQGHEKEMKQTGSELDVILERWIENHRQQRKFSGTKENDSDFIDVMMSLAEQGKLSHLQYDANTSIKSTCLALILGGSDTSASTLTWAISLLLNNKEMLKKAQDEIDIHVGRDRNVEDSDIENLVYLQAIIKETLRLYPAGPLLGPREAMEDCTVAGYYVPCGTRLIVNVWKIQRDPKVYMEPNEFRPERFITGEAKEFDVRGQNFELMPFGSGRRSCPGSSLAMQVLHLGLARFLHSFDVKTVMDMPVDMSENPGLTIPKATPLEVLISPRIKEELFV.

The helical transmembrane segment at 1–21 (MDTSLFSLFVPILVFVFIALF) threads the bilayer. Residue Cys463 participates in heme binding.

This sequence belongs to the cytochrome P450 family. It depends on heme as a cofactor. In terms of tissue distribution, expressed in both primary and lateral roots under iron-deficient conditions, except in apical root zones, and mostly in the root epidermal layer.

Its subcellular location is the membrane. It carries out the reaction fraxetin + reduced [NADPH--hemoprotein reductase] + O2 = sideretin (reduced form) + oxidized [NADPH--hemoprotein reductase] + H2O + H(+). The catalysed reaction is xanthotoxin + reduced [NADPH--hemoprotein reductase] + O2 = 5-hydroxyxanthotoxin + oxidized [NADPH--hemoprotein reductase] + H2O + 2 H(+). The protein operates within phenylpropanoid metabolism. Functionally, can hydroxylate xanthotoxin (8-methoxypsoralen) to form 5-hydroxyxanthotoxin (5-hydroxy-8-methoxypsoralen) in vivo and in vitro. Involved in the early iron deficiency response, possibly through an IDE1-like mediated pathway. Involved in the pathway of sideretin biosynthesis from feruloyl CoA, a redox-active catecholic metabolite exuded by roots in response to iron deficiency in order to facilitate the uptake of iron; this pathway consists in the successive conversion from feruloyl CoA to scopoletin, from scopoletin to fraxetin and from fraxetin to sideretin. Catalyzes the biosynthesis of sideretin via fraxetin hydroxylation. This Arabidopsis thaliana (Mouse-ear cress) protein is Xanthotoxin 5-hydroxylase CYP82C4.